The chain runs to 142 residues: Large ribosomal subunit protein uL13 (142 aa).

Belongs to the universal ribosomal protein uL13 family. As to quaternary structure, part of the 50S ribosomal subunit.

Functionally, this protein is one of the early assembly proteins of the 50S ribosomal subunit, although it is not seen to bind rRNA by itself. It is important during the early stages of 50S assembly. The polypeptide is Large ribosomal subunit protein uL13 (Pseudomonas fluorescens (strain ATCC BAA-477 / NRRL B-23932 / Pf-5)).